The sequence spans 212 residues: ER lumen protein-retaining receptor 1 (212 aa).

Over 1–4 (MNLF) the chain is Lumenal. Residues 5 to 24 (RFLGDLSHLLAIILLLLKIW) traverse the membrane as a helical segment. The Cytoplasmic segment spans residues 25–32 (KSRSCAGI). A helical membrane pass occupies residues 33-52 (SGKSQVLFAVVFTARYLDLF). The tract at residues 47 to 48 (RY) is interaction with the K-D-E-L motif on target proteins. Topologically, residues 53–58 (TNYISL) are lumenal. Residues 59-79 (YNTCMKVVYIACSFTTVWMIY) traverse the membrane as a helical segment. Residues 80 to 92 (SKFKATYDGNHDT) lie on the Cytoplasmic side of the membrane. The helical transmembrane segment at 93–110 (FRVEFLVIPTAILAFLVN) threads the bilayer. The Lumenal portion of the chain corresponds to 111-116 (HDFTPL). Residues 117-135 (EILWTFSIYLESVAILPQL) traverse the membrane as a helical segment. Residues 136-149 (FMVSKTGEAETITS) are Cytoplasmic-facing. The chain crosses the membrane as a helical span at residues 150 to 168 (HYLFALGVYRTLYLFNWIW). The tract at residues 159–169 (RTLYLFNWIWR) is interaction with the K-D-E-L motif on target proteins. Over 169–178 (RYHFEGFFDL) the chain is Lumenal. A helical membrane pass occupies residues 179–199 (IAIVAGLVQTVLYCDFFYLYI). Residues 200–212 (TKVLKGKKLSLPA) lie on the Cytoplasmic side of the membrane. The tract at residues 204 to 207 (KGKK) is important for recycling of cargo proteins with the sequence motif K-D-E-L from the Golgi to the endoplasmic reticulum. Ser-209 is modified (phosphoserine; by PKA).

It belongs to the ERD2 family. Upon ligand binding the receptor oligomerizes and interacts with components of the transport machinery such as ARFGAP1 and ARF1. Phosphorylation by PKA at Ser-209 is required for endoplasmic reticulum retention function.

The protein resides in the golgi apparatus membrane. Its subcellular location is the cytoplasmic vesicle. The protein localises to the COPI-coated vesicle membrane. It localises to the endoplasmic reticulum membrane. It is found in the endoplasmic reticulum-Golgi intermediate compartment membrane. In terms of biological role, receptor for the C-terminal sequence motif K-D-E-L that is present on endoplasmic reticulum resident proteins and that mediates their recycling from the Golgi back to the endoplasmic reticulum. This chain is ER lumen protein-retaining receptor 1 (KDELR1), found in Bos taurus (Bovine).